The sequence spans 146 residues: NADPH-dependent 7-cyano-7-deazaguanine reductase (146 aa).

The active-site Thioimide intermediate is the Cys-48. Residue Asp-55 is the Proton donor of the active site. Substrate contacts are provided by residues 70 to 72 (VES) and 89 to 90 (HE).

This sequence belongs to the GTP cyclohydrolase I family. QueF type 1 subfamily.

The protein resides in the cytoplasm. It carries out the reaction 7-aminomethyl-7-carbaguanine + 2 NADP(+) = 7-cyano-7-deazaguanine + 2 NADPH + 3 H(+). It functions in the pathway tRNA modification; tRNA-queuosine biosynthesis. Functionally, catalyzes the NADPH-dependent reduction of 7-cyano-7-deazaguanine (preQ0) to 7-aminomethyl-7-deazaguanine (preQ1). The sequence is that of NADPH-dependent 7-cyano-7-deazaguanine reductase from Helicobacter pylori (strain Shi470).